Here is a 343-residue protein sequence, read N- to C-terminus: Dihydroorotate dehydrogenase (quinone) (343 aa).

Residues 61–65 and threonine 85 contribute to the FMN site; that span reads AGLDK. Position 65 (lysine 65) interacts with substrate. 110 to 114 lines the substrate pocket; the sequence is NRMGF. FMN is bound by residues asparagine 138 and asparagine 171. Asparagine 171 is a binding site for substrate. Serine 174 acts as the Nucleophile in catalysis. Position 176 (asparagine 176) interacts with substrate. FMN-binding residues include lysine 216 and threonine 244. 245-246 is a substrate binding site; that stretch reads NT. Residues glycine 267, glycine 296, and 317–318 contribute to the FMN site; that span reads YS.

It belongs to the dihydroorotate dehydrogenase family. Type 2 subfamily. As to quaternary structure, monomer. The cofactor is FMN.

Its subcellular location is the cell membrane. The enzyme catalyses (S)-dihydroorotate + a quinone = orotate + a quinol. Its pathway is pyrimidine metabolism; UMP biosynthesis via de novo pathway; orotate from (S)-dihydroorotate (quinone route): step 1/1. Catalyzes the conversion of dihydroorotate to orotate with quinone as electron acceptor. The protein is Dihydroorotate dehydrogenase (quinone) of Pseudomonas syringae pv. tomato (strain ATCC BAA-871 / DC3000).